A 364-amino-acid chain; its full sequence is Phosphoserine aminotransferase (364 aa).

Arginine 42 is an L-glutamate binding site. Residues 76 to 77 (GR), tryptophan 102, threonine 156, aspartate 175, and glutamine 198 contribute to the pyridoxal 5'-phosphate site. Lysine 199 is subject to N6-(pyridoxal phosphate)lysine. A pyridoxal 5'-phosphate-binding site is contributed by 240 to 241 (NT).

The protein belongs to the class-V pyridoxal-phosphate-dependent aminotransferase family. SerC subfamily. In terms of assembly, homodimer. The cofactor is pyridoxal 5'-phosphate.

Its subcellular location is the cytoplasm. The enzyme catalyses O-phospho-L-serine + 2-oxoglutarate = 3-phosphooxypyruvate + L-glutamate. The catalysed reaction is 4-(phosphooxy)-L-threonine + 2-oxoglutarate = (R)-3-hydroxy-2-oxo-4-phosphooxybutanoate + L-glutamate. The protein operates within amino-acid biosynthesis; L-serine biosynthesis; L-serine from 3-phospho-D-glycerate: step 2/3. Its pathway is cofactor biosynthesis; pyridoxine 5'-phosphate biosynthesis; pyridoxine 5'-phosphate from D-erythrose 4-phosphate: step 3/5. In terms of biological role, catalyzes the reversible conversion of 3-phosphohydroxypyruvate to phosphoserine and of 3-hydroxy-2-oxo-4-phosphonooxybutanoate to phosphohydroxythreonine. The polypeptide is Phosphoserine aminotransferase (Shewanella woodyi (strain ATCC 51908 / MS32)).